Consider the following 226-residue polypeptide: Large ribosomal subunit protein uL1 (226 aa).

Belongs to the universal ribosomal protein uL1 family. In terms of assembly, part of the 50S ribosomal subunit.

Functionally, binds directly to 23S rRNA. The L1 stalk is quite mobile in the ribosome, and is involved in E site tRNA release. In terms of biological role, protein L1 is also a translational repressor protein, it controls the translation of the L11 operon by binding to its mRNA. This is Large ribosomal subunit protein uL1 from Treponema denticola (strain ATCC 35405 / DSM 14222 / CIP 103919 / JCM 8153 / KCTC 15104).